The sequence spans 325 residues: Eukaryotic translation initiation factor 3 subunit I (325 aa).

5 WD repeats span residues 8–47 (GHER…RLGT), 50–91 (GHTG…ALLQ), 144–183 (CSES…IVNS), 186–225 (EHSK…HQKT), and 283–324 (GHFG…FEFE).

It belongs to the eIF-3 subunit I family. Component of the eukaryotic translation initiation factor 3 (eIF-3) complex, which is composed of 13 subunits: eif3a, eif3b, eif3c, eif3d, eif3e, eif3f, eif3g, eif3h, eif3i, eif3j, eif3k, eif3l and eif3m.

The protein resides in the cytoplasm. In terms of biological role, component of the eukaryotic translation initiation factor 3 (eIF-3) complex, which is involved in protein synthesis of a specialized repertoire of mRNAs and, together with other initiation factors, stimulates binding of mRNA and methionyl-tRNAi to the 40S ribosome. The eIF-3 complex specifically targets and initiates translation of a subset of mRNAs involved in cell proliferation. The sequence is that of Eukaryotic translation initiation factor 3 subunit I (eif3i) from Xenopus laevis (African clawed frog).